The chain runs to 908 residues: Probable serine/threonine-protein kinase DDB_G0278521 (908 aa).

Residues 1-153 are Extracellular-facing; sequence MSNNKIIESL…RGEKLSTLDR (153 aa). The helical transmembrane segment at 154 to 174 threads the bilayer; that stretch reads IICFSIIYSQDQILLFLLNFI. At 175 to 908 the chain is on the cytoplasmic side; sequence LSNINCNNNN…SDQNDSDLYD (734 aa). ANK repeat units follow at residues 258 to 289, 300 to 326, 330 to 361, 362 to 391, and 395 to 424; these read LKVY…NVYN, TNRS…NIHD, KGML…ALDQ, SNNT…RLSI, and NGRY…KMNS. The segment covering 461 to 472 has biased composition (low complexity); sequence NSNNLTNSNSSS. The segment at 461–491 is disordered; that stretch reads NSNNLTNSNSSSVGGLRISNGGNTQQQSIQI. Residues 480-490 show a composition bias toward polar residues; sequence NGGNTQQQSIQ. The ANK 6 repeat unit spans residues 495–524; sequence ENNTPIDLLVLNNHFTIAIELLKYEGYIVG. One can recognise a Protein kinase domain in the interval 530–817; that stretch reads FKTARKIGAG…LPIANIPKFL (288 aa). Residues 536–544 and lysine 557 contribute to the ATP site; that span reads IGAGAFGDV. Aspartate 677 acts as the Proton acceptor in catalysis.

It belongs to the protein kinase superfamily. TKL Ser/Thr protein kinase family.

The protein resides in the membrane. The enzyme catalyses L-seryl-[protein] + ATP = O-phospho-L-seryl-[protein] + ADP + H(+). The catalysed reaction is L-threonyl-[protein] + ATP = O-phospho-L-threonyl-[protein] + ADP + H(+). This Dictyostelium discoideum (Social amoeba) protein is Probable serine/threonine-protein kinase DDB_G0278521.